The primary structure comprises 284 residues: 4-hydroxybenzoate octaprenyltransferase (284 aa).

The next 8 membrane-spanning stretches (helical) occupy residues 16-36 (PIGILLLLWPTLWALWLASDG), 40-60 (WTLLAIFTLGTILMRSAGCAI), 91-111 (LLVALALALLSFALIWPLNTL), 132-152 (FFAIPQAYLGIAFGFGIPMGF), 157-177 (NTVPAAAWWLLVANVFWAVAY), 206-226 (VAAVMFCYAVTLGLIFIVGWQ), 231-251 (TWFAAGMLIATGCAIYHYTLI), and 259-279 (CFAAFRHNNWLGAAIFGGVVL).

The protein belongs to the UbiA prenyltransferase family. Mg(2+) serves as cofactor.

The protein resides in the cell inner membrane. It carries out the reaction all-trans-octaprenyl diphosphate + 4-hydroxybenzoate = 4-hydroxy-3-(all-trans-octaprenyl)benzoate + diphosphate. The protein operates within cofactor biosynthesis; ubiquinone biosynthesis. Functionally, catalyzes the prenylation of para-hydroxybenzoate (PHB) with an all-trans polyprenyl group. Mediates the second step in the final reaction sequence of ubiquinone-8 (UQ-8) biosynthesis, which is the condensation of the polyisoprenoid side chain with PHB, generating the first membrane-bound Q intermediate 3-octaprenyl-4-hydroxybenzoate. The protein is 4-hydroxybenzoate octaprenyltransferase of Herminiimonas arsenicoxydans.